The sequence spans 147 residues: Cysteine proteinase inhibitor 2 (147 aa).

A signal peptide spans methionine 1–alanine 27. One can recognise a Cystatin domain in the interval leucine 87–serine 117. The Secondary area of contact motif lies at glutamine 98 to glycine 102. The N-linked (GlcNAc...) asparagine glycan is linked to asparagine 115.

This sequence belongs to the cystatin family. Phytocystatin subfamily.

It localises to the secreted. Specific inhibitor of cysteine proteinases. Probably involved in the regulation of endogenous processes and in defense against pests and pathogens. The polypeptide is Cysteine proteinase inhibitor 2 (CYS2) (Arabidopsis thaliana (Mouse-ear cress)).